The primary structure comprises 673 residues: Vasorin (673 aa).

Residues Met-1 to Gly-24 form the signal peptide. The region spanning Cys-25–Pro-53 is the LRRNT domain. Residues Cys-25–Pro-576 are Extracellular-facing. LRR repeat units lie at residues Asp-54 to Gly-75, Gly-78 to Pro-99, Asn-102 to Gly-123, Arg-126 to Ala-147, Arg-150 to Pro-170, Arg-171 to Thr-192, Asn-194 to Arg-215, Asn-218 to Leu-239, Gly-241 to Thr-265, and Ala-266 to Phe-288. 2 N-linked (GlcNAc...) asparagine glycosylation sites follow: Asn-102 and Asn-118. An N-linked (GlcNAc...) asparagine glycan is attached at Asn-274. Positions Asn-299–Val-352 constitute an LRRCT domain. The tract at residues Pro-369–Gln-389 is disordered. Polar residues predominate over residues Thr-370–Gln-389. The EGF-like domain occupies Gln-406–Glu-443. 3 disulfides stabilise this stretch: Cys-410-Cys-421, Cys-415-Cys-431, and Cys-433-Cys-442. Positions Pro-463 to Ala-559 constitute a Fibronectin type-III domain. Residues Asn-501, Asn-529, and Asn-555 are each glycosylated (N-linked (GlcNAc...) asparagine). Residues Leu-577–Ala-597 traverse the membrane as a helical segment. The Cytoplasmic portion of the chain corresponds to Tyr-598–Ile-673. Residues Thr-608–Gly-648 form a disordered region.

Interacts with TGFB1, TGFB2 and TGFB3. Post-translationally, N-glycosylated.

Its subcellular location is the membrane. Functionally, may act as an inhibitor of TGF-beta signaling. This is Vasorin (Vasn) from Mus musculus (Mouse).